The chain runs to 208 residues: UPF0319 protein VSAL_I2129 (208 aa).

The signal sequence occupies residues 1 to 21 (MKFHSFLAAGLCLLTSLSASA).

The protein belongs to the UPF0319 family.

This chain is UPF0319 protein VSAL_I2129, found in Aliivibrio salmonicida (strain LFI1238) (Vibrio salmonicida (strain LFI1238)).